Reading from the N-terminus, the 57-residue chain is UPF0391 membrane protein Arad_3976 (57 aa).

2 consecutive transmembrane segments (helical) span residues Trp-4–Ser-24 and Val-33–Gly-53.

This sequence belongs to the UPF0391 family.

The protein resides in the cell membrane. The protein is UPF0391 membrane protein Arad_3976 of Rhizobium rhizogenes (strain K84 / ATCC BAA-868) (Agrobacterium radiobacter).